The chain runs to 326 residues: Vestitone reductase (326 aa).

NADP(+)-binding positions include 12 to 18 (GGTGFLG), Arg-37, and Tyr-164.

The protein belongs to the NAD(P)-dependent epimerase/dehydratase family. Dihydroflavonol-4-reductase subfamily. Monomer. As to expression, detected in roots, and at lower levels in root nodules. Not detected in petioles, leaf and stem.

It carries out the reaction a (3R,4R)-4,2'-dihydroxyisoflavan + NADP(+) = a (3R)-2'-hydroxyisoflavanone + NADPH + H(+). Inhibited by vestitone concentrations above 50 uM. In terms of biological role, stereospecific enzyme that catalyzes the NADPH-dependent reduction of (3R)-vestitone to (3R,4R)-4'-methoxyisoflavan-2',4,7-triol (DMI). Has no activity with (3S)-vestitone. Catalyzes the penultimate step in the biosynthesis of the phytoalexin medicarpin, and thereby contributes to plant defense reactions. The sequence is that of Vestitone reductase from Medicago sativa (Alfalfa).